Here is a 949-residue protein sequence, read N- to C-terminus: Translation initiation factor IF-2 (949 aa).

Disordered regions lie at residues 61-122 (IQAN…PIIK), 139-159 (VENT…QKLQ), and 171-284 (LTQS…NKSH). Basic and acidic residues-rich tracts occupy residues 112-122 (KKKEAPAPIIK) and 150-159 (QIEKAKQKLQ). The segment covering 174–190 (SNTNTTNNANSASNVSN) has biased composition (low complexity). The span at 191-208 (AKKEISEVKKQEQEIKRH) shows a compositional bias: basic and acidic residues. Residues 209-220 (ENIKRRTGFRVI) show a composition bias toward basic residues. Positions 249–264 (EDIKKEWQEKDKQETK) are enriched in basic and acidic residues. One can recognise a tr-type G domain in the interval 448–617 (ERPPVVTIMG…LIQADIMELK (170 aa)). The tract at residues 457 to 464 (GHVDHGKT) is G1. 457–464 (GHVDHGKT) contributes to the GTP binding site. Residues 482-486 (GITQH) form a G2 region. The G3 stretch occupies residues 503–506 (DTPG). GTP-binding positions include 503-507 (DTPGH) and 557-560 (NKMD). Residues 557-560 (NKMD) form a G4 region. A G5 region spans residues 593-595 (SAK).

This sequence belongs to the TRAFAC class translation factor GTPase superfamily. Classic translation factor GTPase family. IF-2 subfamily.

The protein localises to the cytoplasm. Its function is as follows. One of the essential components for the initiation of protein synthesis. Protects formylmethionyl-tRNA from spontaneous hydrolysis and promotes its binding to the 30S ribosomal subunits. Also involved in the hydrolysis of GTP during the formation of the 70S ribosomal complex. The protein is Translation initiation factor IF-2 (infB) of Helicobacter pylori (strain J99 / ATCC 700824) (Campylobacter pylori J99).